The primary structure comprises 814 residues: MTTGDCQTLSRRISNPYLEHSPSQIYGENSSCAGRALRNIIILQAADLVKDRVNLKGFYRRSCVGSELVDWLLEHCPFVQCRSMAIGVWQLLLDMGIMSSVDQHLYFQDNYVFYQFSSDECSYLYCEFEREEEWQKGVKLLLELVHLIPARAGICDLSHQKTEDSEESSDEILARLTSAVQRELAAVIALKARKSAIEQDDENADKHVTVTEANNGPDPQAGVMCKLQERDDIGRIELVHKLARENCQFLQTEKKESEKLEQQDDEVTMVQVKEQGQSVLVLKKVASCGPAPTSGSAENDARYVVVSGTPEKILEHLLNDLHLAEVQHKETETLLDDFLLTYTVFMTTDDLCQALLRHYSAKKYQGEEENSDVPCRKRKVLHLVSQWISLYKDWLHEDEHSKMFLKTIYRNVLDDVYEYPILEKELKEFQKILGVYRRHTVDEYSPQKKNKALFHQFSLKENWLQHRGTVAETEEIFCHVYITEHSYISVKAKVSSTAQEILKVVAEKLQRAEEDLALVAITFSGEKHEFQPNDLAISKSLEASGRIYVYRKDLADTLNPLAENEESQQRSMRILGMNTWDLALELMSFDWSLFNSIHEQELIYFTFSRQGNGENTVNLSLLLQRCNEVQLWVATEILLCSQLGKRVQLVKKFIKIAAHCKAQQNLNSFFAIVMGLNTASVSRLSQTWEKIPGKFKKLFSELESLTDPSLNHKAYRDAFKKMKPPKIPFMPLLLKDVTFIHEGNKTFLDNLVNFEKLHMIADTVRTLRHCRTNQFGSDVSPKEQQELKSYVNHLYVIDSQQALFELSHRLEPRA.

Residues 43 to 118 (LQAADLVKDR…DNYVFYQFSS (76 aa)) enclose the DEP domain. The 134-residue stretch at 301–434 (ARYVVVSGTP…ELKEFQKILG (134 aa)) folds into the N-terminal Ras-GEF domain. Residues 578–813 (NTWDLALELM…FELSHRLEPR (236 aa)) form the Ras-GEF domain.

Its subcellular location is the nucleus. Guanine nucleotide exchange factor (GEF) for RAP1A, RAP2A and MRAS/M-Ras-GTP. Its association with MRAS inhibits Rap1 activation. The protein is Rap guanine nucleotide exchange factor 5 (Rapgef5) of Mus musculus (Mouse).